Consider the following 96-residue polypeptide: Large ribosomal subunit protein eL14 (96 aa).

This sequence belongs to the eukaryotic ribosomal protein eL14 family.

The sequence is that of Large ribosomal subunit protein eL14 from Saccharolobus solfataricus (strain ATCC 35092 / DSM 1617 / JCM 11322 / P2) (Sulfolobus solfataricus).